A 70-amino-acid polypeptide reads, in one-letter code: Small ribosomal subunit protein bS21 (70 aa).

This sequence belongs to the bacterial ribosomal protein bS21 family.

This chain is Small ribosomal subunit protein bS21, found in Wolinella succinogenes (strain ATCC 29543 / DSM 1740 / CCUG 13145 / JCM 31913 / LMG 7466 / NCTC 11488 / FDC 602W) (Vibrio succinogenes).